We begin with the raw amino-acid sequence, 552 residues long: Dihydroxy-acid dehydratase (552 aa).

Aspartate 78 is a Mg(2+) binding site. Residue cysteine 119 coordinates [2Fe-2S] cluster. Residues aspartate 120 and lysine 121 each coordinate Mg(2+). The residue at position 121 (lysine 121) is an N6-carboxylysine. [2Fe-2S] cluster is bound at residue cysteine 191. A Mg(2+)-binding site is contributed by glutamate 442. The Proton acceptor role is filled by serine 468.

This sequence belongs to the IlvD/Edd family. In terms of assembly, homodimer. Requires [2Fe-2S] cluster as cofactor. Mg(2+) is required as a cofactor.

It carries out the reaction (2R)-2,3-dihydroxy-3-methylbutanoate = 3-methyl-2-oxobutanoate + H2O. The catalysed reaction is (2R,3R)-2,3-dihydroxy-3-methylpentanoate = (S)-3-methyl-2-oxopentanoate + H2O. Its pathway is amino-acid biosynthesis; L-isoleucine biosynthesis; L-isoleucine from 2-oxobutanoate: step 3/4. It functions in the pathway amino-acid biosynthesis; L-valine biosynthesis; L-valine from pyruvate: step 3/4. Functions in the biosynthesis of branched-chain amino acids. Catalyzes the dehydration of (2R,3R)-2,3-dihydroxy-3-methylpentanoate (2,3-dihydroxy-3-methylvalerate) into 2-oxo-3-methylpentanoate (2-oxo-3-methylvalerate) and of (2R)-2,3-dihydroxy-3-methylbutanoate (2,3-dihydroxyisovalerate) into 2-oxo-3-methylbutanoate (2-oxoisovalerate), the penultimate precursor to L-isoleucine and L-valine, respectively. This is Dihydroxy-acid dehydratase from Caldicellulosiruptor saccharolyticus (strain ATCC 43494 / DSM 8903 / Tp8T 6331).